The sequence spans 87 residues: Protein Tat (87 aa).

Positions methionine 1–proline 21 are disordered. Residues methionine 1–lysine 24 form an interaction with human CREBBP region. A transactivation region spans residues methionine 1–glycine 48. The Zn(2+) site is built by cysteine 22, cysteine 25, and cysteine 27. The tract at residues cysteine 22–cysteine 37 is cysteine-rich. Lysine 28 is modified (N6-acetyllysine; by host PCAF). Residues cysteine 30, histidine 33, cysteine 34, and cysteine 37 each contribute to the Zn(2+) site. A core region spans residues phenylalanine 38–glycine 48. Positions isoleucine 45–glutamate 87 are disordered. Basic residues predominate over residues glycine 48–proline 58. A Nuclear localization signal, RNA-binding (TAR), and protein transduction motif is present at residues arginine 49–arginine 57. An interaction with the host capping enzyme RNGTT region spans residues arginine 49–glutamate 87. Lysine 50 and lysine 51 each carry N6-acetyllysine; by host EP300 and GCN5L2. 2 positions are modified to asymmetric dimethylarginine; by host PRMT6: arginine 52 and arginine 53. The span at histidine 77–glutamate 87 shows a compositional bias: basic and acidic residues. Residues arginine 78–aspartate 80 carry the Cell attachment site motif.

It belongs to the lentiviruses Tat family. In terms of assembly, interacts with host CCNT1. Associates with the P-TEFb complex composed at least of Tat, P-TEFb (CDK9 and CCNT1), TAR RNA, RNA Pol II. Recruits the HATs CREBBP, TAF1/TFIID, EP300, PCAF and GCN5L2. Interacts with host KAT5/Tip60; this interaction targets the latter to degradation. Interacts with the host deacetylase SIRT1. Interacts with host capping enzyme RNGTT; this interaction stimulates RNGTT. Binds to host KDR, and to the host integrins ITGAV/ITGB3 and ITGA5/ITGB1. Interacts with host KPNB1/importin beta-1 without previous binding to KPNA1/importin alpha-1. Interacts with EIF2AK2. Interacts with host nucleosome assembly protein NAP1L1; this interaction may be required for the transport of Tat within the nucleus, since the two proteins interact at the nuclear rim. Interacts with host C1QBP/SF2P32; this interaction involves lysine-acetylated Tat. Interacts with the host chemokine receptors CCR2, CCR3 and CXCR4. Interacts with host DPP4/CD26; this interaction may trigger an anti-proliferative effect. Interacts with host LDLR. Interacts with the host extracellular matrix metalloproteinase MMP1. Interacts with host PRMT6; this interaction mediates Tat's methylation. Interacts with, and is ubiquitinated by MDM2/Hdm2. Interacts with host PSMC3 and HTATIP2. Interacts with STAB1; this interaction may overcome SATB1-mediated repression of IL2 and IL2RA (interleukin) in T cells by binding to the same domain than HDAC1. Interacts (when acetylated) with human CDK13, thereby increasing HIV-1 mRNA splicing and promoting the production of the doubly spliced HIV-1 protein Nef. Interacts with host TBP; this interaction modulates the activity of transcriptional pre-initiation complex. Interacts with host RELA. Interacts with host PLSCR1; this interaction negatively regulates Tat transactivation activity by altering its subcellular distribution. In terms of processing, asymmetrical arginine methylation by host PRMT6 seems to diminish the transactivation capacity of Tat and affects the interaction with host CCNT1. Acetylation by EP300, CREBBP, GCN5L2/GCN5 and PCAF regulates the transactivation activity of Tat. EP300-mediated acetylation of Lys-50 promotes dissociation of Tat from the TAR RNA through the competitive binding to PCAF's bromodomain. In addition, the non-acetylated Tat's N-terminus can also interact with PCAF. PCAF-mediated acetylation of Lys-28 enhances Tat's binding to CCNT1. Lys-50 is deacetylated by SIRT1. Post-translationally, polyubiquitination by host MDM2 does not target Tat to degradation, but activates its transactivation function and fosters interaction with CCNT1 and TAR RNA. In terms of processing, phosphorylated by EIF2AK2 on serine and threonine residues adjacent to the basic region important for TAR RNA binding and function. Phosphorylation of Tat by EIF2AK2 is dependent on the prior activation of EIF2AK2 by dsRNA.

The protein resides in the host nucleus. It localises to the host nucleolus. Its subcellular location is the host cytoplasm. It is found in the secreted. In terms of biological role, transcriptional activator that increases RNA Pol II processivity, thereby increasing the level of full-length viral transcripts. Recognizes a hairpin structure at the 5'-LTR of the nascent viral mRNAs referred to as the transactivation responsive RNA element (TAR) and recruits the cyclin T1-CDK9 complex (P-TEFb complex) that will in turn hyperphosphorylate the RNA polymerase II to allow efficient elongation. The CDK9 component of P-TEFb and other Tat-activated kinases hyperphosphorylate the C-terminus of RNA Pol II that becomes stabilized and much more processive. Other factors such as HTATSF1/Tat-SF1, SUPT5H/SPT5, and HTATIP2 are also important for Tat's function. Besides its effect on RNA Pol II processivity, Tat induces chromatin remodeling of proviral genes by recruiting the histone acetyltransferases (HATs) CREBBP, EP300 and PCAF to the chromatin. This also contributes to the increase in proviral transcription rate, especially when the provirus integrates in transcriptionally silent region of the host genome. To ensure maximal activation of the LTR, Tat mediates nuclear translocation of NF-kappa-B by interacting with host RELA. Through its interaction with host TBP, Tat may also modulate transcription initiation. Tat can reactivate a latently infected cell by penetrating in it and transactivating its LTR promoter. In the cytoplasm, Tat is thought to act as a translational activator of HIV-1 mRNAs. Its function is as follows. Extracellular circulating Tat can be endocytosed by surrounding uninfected cells via the binding to several surface receptors such as CD26, CXCR4, heparan sulfate proteoglycans (HSPG) or LDLR. Neurons are rarely infected, but they internalize Tat via their LDLR. Through its interaction with nuclear HATs, Tat is potentially able to control the acetylation-dependent cellular gene expression. Modulates the expression of many cellular genes involved in cell survival, proliferation or in coding for cytokines or cytokine receptors. Tat plays a role in T-cell and neurons apoptosis. Tat induced neurotoxicity and apoptosis probably contribute to neuroAIDS. Circulating Tat also acts as a chemokine-like and/or growth factor-like molecule that binds to specific receptors on the surface of the cells, affecting many cellular pathways. In the vascular system, Tat binds to ITGAV/ITGB3 and ITGA5/ITGB1 integrins dimers at the surface of endothelial cells and competes with bFGF for heparin-binding sites, leading to an excess of soluble bFGF. In Homo sapiens (Human), this protein is Protein Tat.